Here is a 622-residue protein sequence, read N- to C-terminus: MQRSKSSLAALTLGAIGVVYGDIGTSVLYAVKEVFGSGHVAFTPQNVYGVLSILFWTLTTIVSLKYVVLVLRADNNGEGGLIAMLALASQAVKDKPRLRSALLGIGVFGTSLFYGDGVITPAISVLSAVEGLEVVSPHFGKAVIPLTLIVLFCLFAVQKRGTSGIGRYFGPVTLVWFTSIAALGVPHIVGHPEILGALSPHHALGFIWRSPGTSFIILGAVVLCVTGAEALYADLGHFGKKPIRLAWFSVAMPALTINYFGQGALLLAEPEAVKNPFYMMAPDWALIPLVIMATMATVIASQALITGAFSVTKQVIQLGYLPRLNILHTSVRDTGQIYIPFVNWALFLAIVLAVVMFRSSSNLAAAYGIAVTLDMLITTVLTFFVIRYGWRYPLALCIAATGFFFLVDLAFFGSNLLKLLQGGWFPLMIGSIVFMLMMTWKRGRELLNEKLRADAIDLRDFLTAVFVNPPTRVDGTAVFLTAEPGAVPNALLHNLKHNKVLHQQNLFVTVRNHEVPWIGLDKRLQVEALGGDCWQVMVHYGFKNDPDLPGALALMRGRGCELESMTTSYFLSRDVVTPTIGSGMAPWREKLFAQMHHNASGAAGFLNLPSNSVVELGSKIEI.

Transmembrane regions (helical) follow at residues 8-28 (LAALTLGAIGVVYGDIGTSVL), 50-70 (VLSILFWTLTTIVSLKYVVLV), 103-123 (LGIGVFGTSLFYGDGVITPAI), 137-157 (PHFGKAVIPLTLIVLFCLFAV), 169-189 (FGPVTLVWFTSIAALGVPHIV), 215-235 (FIILGAVVLCVTGAEALYADL), 247-267 (WFSVAMPALTINYFGQGALLL), 285-305 (ALIPLVIMATMATVIASQALI), 337-357 (IYIPFVNWALFLAIVLAVVMF), 366-386 (AYGIAVTLDMLITTVLTFFVI), 393-413 (PLALCIAATGFFFLVDLAFFG), and 419-439 (LLQGGWFPLMIGSIVFMLMMT).

It belongs to the HAK/KUP transporter (TC 2.A.72) family.

The protein resides in the cell inner membrane. The enzyme catalyses K(+)(in) + H(+)(in) = K(+)(out) + H(+)(out). In terms of biological role, transport of potassium into the cell. Likely operates as a K(+):H(+) symporter. This Paracidovorax citrulli (strain AAC00-1) (Acidovorax citrulli) protein is Probable potassium transport system protein Kup.